We begin with the raw amino-acid sequence, 637 residues long: tRNA uridine 5-carboxymethylaminomethyl modification enzyme MnmG (637 aa).

FAD contacts are provided by residues 15–20 (GAGHAG), isoleucine 127, and serine 182. 276 to 290 (GPRYCPSIEDKIVRF) lines the NAD(+) pocket. Glutamine 373 contributes to the FAD binding site.

It belongs to the MnmG family. In terms of assembly, homodimer. Heterotetramer of two MnmE and two MnmG subunits. Requires FAD as cofactor.

Its subcellular location is the cytoplasm. NAD-binding protein involved in the addition of a carboxymethylaminomethyl (cmnm) group at the wobble position (U34) of certain tRNAs, forming tRNA-cmnm(5)s(2)U34. This is tRNA uridine 5-carboxymethylaminomethyl modification enzyme MnmG from Streptococcus pneumoniae (strain ATCC BAA-255 / R6).